The chain runs to 60 residues: HDRPTFCNLAPESGRCRGHLRRIYYNLESNKCKVFFYGGCGGNANNFETRDECRETCGGK.

One can recognise a BPTI/Kunitz inhibitor domain in the interval 7–57; the sequence is CNLAPESGRCRGHLRRIYYNLESNKCKVFFYGGCGGNANNFETRDECRETC. Cystine bridges form between Cys-7-Cys-57, Cys-16-Cys-40, and Cys-32-Cys-53.

Belongs to the venom Kunitz-type family. In terms of tissue distribution, expressed by the venom gland.

The protein resides in the secreted. Its function is as follows. Serine protease inhibitor. This is Kunitz-type serine protease inhibitor 2 from Daboia siamensis (Eastern Russel's viper).